A 559-amino-acid chain; its full sequence is Dihydroxy-acid dehydratase (559 aa).

Position 52 (cysteine 52) interacts with [2Fe-2S] cluster. Aspartate 84 is a Mg(2+) binding site. Cysteine 125 serves as a coordination point for [2Fe-2S] cluster. Residues aspartate 126 and lysine 127 each coordinate Mg(2+). An N6-carboxylysine modification is found at lysine 127. Cysteine 197 serves as a coordination point for [2Fe-2S] cluster. Residue glutamate 447 participates in Mg(2+) binding. The active-site Proton acceptor is the serine 473.

The protein belongs to the IlvD/Edd family. Homodimer. [2Fe-2S] cluster serves as cofactor. It depends on Mg(2+) as a cofactor.

It carries out the reaction (2R)-2,3-dihydroxy-3-methylbutanoate = 3-methyl-2-oxobutanoate + H2O. The catalysed reaction is (2R,3R)-2,3-dihydroxy-3-methylpentanoate = (S)-3-methyl-2-oxopentanoate + H2O. It functions in the pathway amino-acid biosynthesis; L-isoleucine biosynthesis; L-isoleucine from 2-oxobutanoate: step 3/4. Its pathway is amino-acid biosynthesis; L-valine biosynthesis; L-valine from pyruvate: step 3/4. Functions in the biosynthesis of branched-chain amino acids. Catalyzes the dehydration of (2R,3R)-2,3-dihydroxy-3-methylpentanoate (2,3-dihydroxy-3-methylvalerate) into 2-oxo-3-methylpentanoate (2-oxo-3-methylvalerate) and of (2R)-2,3-dihydroxy-3-methylbutanoate (2,3-dihydroxyisovalerate) into 2-oxo-3-methylbutanoate (2-oxoisovalerate), the penultimate precursor to L-isoleucine and L-valine, respectively. In Roseiflexus castenholzii (strain DSM 13941 / HLO8), this protein is Dihydroxy-acid dehydratase.